The chain runs to 921 residues: Probable glucan 1,3-alpha-glucosidase (921 aa).

An N-terminal signal peptide occupies residues 1-20 (MRSLLFVLSLICFCSQTALS). The active-site Nucleophile is Asp-512. Residue Glu-515 is part of the active site. Asp-588 functions as the Proton donor in the catalytic mechanism. N-linked (GlcNAc...) asparagine glycosylation is found at Asn-689 and Asn-804.

This sequence belongs to the glycosyl hydrolase 31 family. In terms of assembly, heterodimer of a catalytic alpha subunit (PSL5) and a beta subunit (PSL4). In terms of tissue distribution, expressed in roots, rosette leaves, leaf blades, mature stems, cauline leaves, flower buds, flowers and siliques.

It is found in the endoplasmic reticulum. The enzyme catalyses Hydrolysis of terminal (1-&gt;3)-alpha-D-glucosidic links in (1-&gt;3)-alpha-D-glucans.. Its pathway is glycan metabolism; N-glycan metabolism. In terms of biological role, cleaves sequentially the 2 innermost alpha-1,3-linked glucose residues from the Glc(2)Man(9)GlcNAc(2) oligosaccharide precursor of immature glycoproteins. Essential for stable accumulation of the receptor EFR that determines the specific perception of bacterial elongation factor Tu (EF-Tu), a potent elicitor of the defense response to pathogen-associated molecular patterns (PAMPs). Required for sustained activation of EFR-mediated signaling, but not receptor FLS2-mediated signaling elicited by the bacterial flagellin flg22. This Arabidopsis thaliana (Mouse-ear cress) protein is Probable glucan 1,3-alpha-glucosidase (PSL5).